The chain runs to 439 residues: Acyl-coenzyme A thioesterase 9, mitochondrial (439 aa).

The N-terminal 21 residues, methionine 1 to glycine 21, are a transit peptide targeting the mitochondrion. 2 consecutive HotDog ACOT-type domains span residues serine 85 to glutamate 209 and glutamate 289 to valine 401. Residue lysine 102 is modified to N6-acetyllysine.

This sequence belongs to the acyl coenzyme A hydrolase family. As to quaternary structure, interacts with NYAP1, NYAP2 and MYO16. As to expression, widely expressed.

Its subcellular location is the mitochondrion. The protein resides in the mitochondrion matrix. It localises to the mitochondrion inner membrane. It catalyses the reaction butanoyl-CoA + H2O = butanoate + CoA + H(+). The enzyme catalyses propanoyl-CoA + H2O = propanoate + CoA + H(+). It carries out the reaction hexadecanoyl-CoA + H2O = hexadecanoate + CoA + H(+). The catalysed reaction is octanoyl-CoA + H2O = octanoate + CoA + H(+). It catalyses the reaction decanoyl-CoA + H2O = decanoate + CoA + H(+). The enzyme catalyses tetradecanoyl-CoA + H2O = tetradecanoate + CoA + H(+). It carries out the reaction 4,8-dimethylnonanoyl-CoA + H2O = 4,8-dimethylnonanoate + CoA + H(+). The catalysed reaction is 3-methylbutanoyl-CoA + H2O = 3-methylbutanoate + CoA + H(+). It catalyses the reaction 2-methylpropanoyl-CoA + H2O = 2-methylpropanoate + CoA + H(+). It participates in lipid metabolism; fatty acid metabolism. Its activity is regulated as follows. Strongly inhibited by NADH and CoA. Mitochondrial acyl-CoA thioesterase. Catalyzes the hydrolysis of acyl-CoAs into free fatty acids and coenzyme A (CoA), regulating their respective intracellular levels. Shows a clear preference for hydrophobic short-, medium-, and long-chain saturated acyl-CoAs with some activity also with short-chain dicarboxylic CoA esters. Regulates both mitochondrial lipid and amino acid metabolism. The sequence is that of Acyl-coenzyme A thioesterase 9, mitochondrial (Acot9) from Mus musculus (Mouse).